Reading from the N-terminus, the 291-residue chain is MGTPWRKRKGIAGPGLPHLSCALVLQPRAQVGTMSPAIALAFLPLVVTLLVRYRHYFRLLVRTVLLRSLRDCLSGLRIEERAFSYVLTHALPGDPGHILTTLDHWSSCCEYLSHMGPVKGQILMRLVEEKAPACVLELGTYCGYSTLLIARALPPGGRLLTVERDPRTAAVAEKLIRLAGFDEHMVELIVGSSEDVIPCLRTQYQLSRADLVLLAHRPRCYLRDLQLLEAHALLPAGATVLADHVLFPGAPRFLQYAKSCGRYRCRLHHTGLPDFPAIKDGIAQLTYAGPG.

Residues 31–51 (VGTMSPAIALAFLPLVVTLLV) traverse the membrane as a helical segment. S-adenosyl-L-methionine contacts are provided by residues Glu-137, 139–140 (GT), Ser-145, Glu-163, and Ser-193.

This sequence belongs to the class I-like SAM-binding methyltransferase superfamily. Cation-dependent O-methyltransferase family. Interacts with LHFPL5, PCDH15, TMC1, TMC2 and TMIE. Interacts directly with TMC1. The interaction of TOMT with TMC1 and TMC2 is required for the transportation of TMC1/2 into the stereocilia of hair cells.

The protein localises to the membrane. The protein resides in the cytoplasm. Its subcellular location is the endoplasmic reticulum. The enzyme catalyses a catechol + S-adenosyl-L-methionine = a guaiacol + S-adenosyl-L-homocysteine + H(+). Catalyzes the O-methylation, and thereby the inactivation, of catecholamine neurotransmitters and catechol hormones. Required for auditory function. Component of the cochlear hair cell's mechanotransduction (MET) machinery. Involved in the assembly of the asymmetric tip-link MET complex. Required for transportation of TMC1 and TMC2 proteins into the mechanically sensitive stereocilia of the hair cells. The function in MET is independent of the enzymatic activity. The chain is Transmembrane O-methyltransferase from Pan troglodytes (Chimpanzee).